The following is a 97-amino-acid chain: Protein GLUTAMINE DUMPER 7 (97 aa).

Residues 1 to 25 (MSLHRDSMVPVNSRLENMDSPILSK) lie on the Extracellular side of the membrane. Residues 26–46 (ICAWGVMLGLFALSLFAMAYA) traverse the membrane as a helical segment. Topologically, residues 47–97 (CYHKQTSNSCIEEKQGKKQVLKPLDMEPKIVVIMAGNENPTFFAKPTQINA) are cytoplasmic. The VIMAG motif lies at 78–82 (VIMAG).

It belongs to the GLUTAMINE DUMPER 1 (TC 9.B.60) family. As to expression, expressed in the vascular tissues, even in the minor veins of the leaves.

The protein localises to the membrane. In terms of biological role, probable subunit of an amino acid transporter involved in the regulation of the amino acid metabolism. Stimulates amino acid export by activating nonselective amino acid facilitators. The sequence is that of Protein GLUTAMINE DUMPER 7 (GDU7) from Arabidopsis thaliana (Mouse-ear cress).